The sequence spans 410 residues: Neuroserpin (410 aa).

The first 16 residues, 1–16 (MAFLGLFSLLVLQSMA), serve as a signal peptide directing secretion. N-linked (GlcNAc...) asparagine glycans are attached at residues Asn157, Asn321, and Asn401. O-linked (Xyl...) (chondroitin sulfate) serine glycosylation is present at Ser403.

Belongs to the serpin family. Monomer. Has a tendency to form large polymers already at 41 and 45 degrees Celsius (in vitro). Detected in brain cortex and hippocampus pyramidal neurons (at protein level). Detected in cerebrospinal fluid (at protein level). Predominantly expressed in the brain.

The protein localises to the secreted. It is found in the cytoplasmic vesicle. The protein resides in the secretory vesicle lumen. Its subcellular location is the perikaryon. Serine protease inhibitor that inhibits plasminogen activators and plasmin but not thrombin. May be involved in the formation or reorganization of synaptic connections as well as for synaptic plasticity in the adult nervous system. May protect neurons from cell damage by tissue-type plasminogen activator. The polypeptide is Neuroserpin (SERPINI1) (Homo sapiens (Human)).